A 320-amino-acid polypeptide reads, in one-letter code: Protoheme IX farnesyltransferase (320 aa).

A disordered region spans residues 1 to 24; sequence MSMITERPVSDPAGQSVSATGDGA. 8 helical membrane passes run 33-55, 68-88, 117-137, 140-160, 183-203, 241-261, 262-282, and 300-320; these read AVVA…VTTV, LWLM…ASVL, NALI…AVFT, LAAG…TAWL, WAAV…VVFF, ILVF…LGAG, MGPI…VEAH, and FHWS…DALI.

The protein belongs to the UbiA prenyltransferase family. Protoheme IX farnesyltransferase subfamily.

It is found in the cell membrane. The catalysed reaction is heme b + (2E,6E)-farnesyl diphosphate + H2O = Fe(II)-heme o + diphosphate. The protein operates within porphyrin-containing compound metabolism; heme O biosynthesis; heme O from protoheme: step 1/1. Its function is as follows. Converts heme B (protoheme IX) to heme O by substitution of the vinyl group on carbon 2 of heme B porphyrin ring with a hydroxyethyl farnesyl side group. The protein is Protoheme IX farnesyltransferase of Salinispora tropica (strain ATCC BAA-916 / DSM 44818 / JCM 13857 / NBRC 105044 / CNB-440).